Reading from the N-terminus, the 256-residue chain is Gramicidin S biosynthesis protein GrsT (256 aa).

Serine 95 is an active-site residue.

The protein belongs to the thioesterase family.

Its pathway is antibiotic biosynthesis; gramicidin S biosynthesis. In terms of biological role, probable thioesterase involved in the biosynthesis of gramicidin S. In Aneurinibacillus migulanus (Bacillus migulanus), this protein is Gramicidin S biosynthesis protein GrsT (grsT).